Consider the following 117-residue polypeptide: Large ribosomal subunit protein bL20 (117 aa).

The protein belongs to the bacterial ribosomal protein bL20 family.

Functionally, binds directly to 23S ribosomal RNA and is necessary for the in vitro assembly process of the 50S ribosomal subunit. It is not involved in the protein synthesizing functions of that subunit. In Nitratidesulfovibrio vulgaris (strain DP4) (Desulfovibrio vulgaris), this protein is Large ribosomal subunit protein bL20.